We begin with the raw amino-acid sequence, 500 residues long: Glycerol kinase (500 aa).

Residue Thr11 participates in ADP binding. ATP contacts are provided by Thr11, Thr12, and Ser13. Thr11 is a binding site for sn-glycerol 3-phosphate. Arg15 is a binding site for ADP. Sn-glycerol 3-phosphate contacts are provided by Arg81, Glu82, Tyr133, and Asp242. Glycerol is bound by residues Arg81, Glu82, Tyr133, Asp242, and Gln243. ADP-binding residues include Thr264 and Gly307. Thr264, Gly307, Gln311, and Gly411 together coordinate ATP. Gly411 contacts ADP.

The protein belongs to the FGGY kinase family.

The enzyme catalyses glycerol + ATP = sn-glycerol 3-phosphate + ADP + H(+). It functions in the pathway polyol metabolism; glycerol degradation via glycerol kinase pathway; sn-glycerol 3-phosphate from glycerol: step 1/1. Its activity is regulated as follows. Inhibited by fructose 1,6-bisphosphate (FBP). In terms of biological role, key enzyme in the regulation of glycerol uptake and metabolism. Catalyzes the phosphorylation of glycerol to yield sn-glycerol 3-phosphate. In Bradyrhizobium sp. (strain BTAi1 / ATCC BAA-1182), this protein is Glycerol kinase.